A 392-amino-acid chain; its full sequence is HORMA domain-containing protein 1 (392 aa).

The HORMA domain occupies 25 to 227 (QQSLMFVKRL…TPFHTFRLKV (203 aa)). Disordered stretches follow at residues 271 to 292 (IKTK…EPNL) and 371 to 392 (LESS…NEHT). The residue at position 374 (S374) is a Phosphoserine. The Nuclear localization signal motif lies at 381–384 (KRRR).

Interacts with HORMAD2. Interacts with IHO1. In terms of processing, phosphorylated at Ser-375 in a SPO11-dependent manner.

It is found in the nucleus. The protein resides in the chromosome. Plays a key role in meiotic progression. Regulates 3 different functions during meiosis: ensures that sufficient numbers of processed DNA double-strand breaks (DSBs) are available for successful homology search by increasing the steady-state numbers of single-stranded DSB ends. Promotes synaptonemal-complex formation independently of its role in homology search. Plays a key role in the male mid-pachytene checkpoint and the female meiotic prophase checkpoint: required for efficient build-up of ATR activity on unsynapsed chromosome regions, a process believed to form the basis of meiotic silencing of unsynapsed chromatin (MSUC) and meiotic prophase quality control in both sexes. This is HORMA domain-containing protein 1 (Hormad1) from Rattus norvegicus (Rat).